A 119-amino-acid polypeptide reads, in one-letter code: Holo-[acyl-carrier-protein] synthase (119 aa).

Mg(2+)-binding residues include D6 and E51.

This sequence belongs to the P-Pant transferase superfamily. AcpS family. Mg(2+) serves as cofactor.

Its subcellular location is the cytoplasm. The enzyme catalyses apo-[ACP] + CoA = holo-[ACP] + adenosine 3',5'-bisphosphate + H(+). Functionally, transfers the 4'-phosphopantetheine moiety from coenzyme A to a Ser of acyl-carrier-protein. This Sulfurovum sp. (strain NBC37-1) protein is Holo-[acyl-carrier-protein] synthase.